A 173-amino-acid chain; its full sequence is Putative pre-16S rRNA nuclease (173 aa).

Belongs to the YqgF nuclease family.

The protein resides in the cytoplasm. Functionally, could be a nuclease involved in processing of the 5'-end of pre-16S rRNA. This chain is Putative pre-16S rRNA nuclease, found in Rhodopirellula baltica (strain DSM 10527 / NCIMB 13988 / SH1).